A 430-amino-acid chain; its full sequence is tRNA pseudouridine synthase Pus10 (430 aa).

Catalysis depends on aspartate 253, which acts as the Nucleophile. Substrate is bound by residues tyrosine 320 and tyrosine 392.

This sequence belongs to the pseudouridine synthase Pus10 family.

It carries out the reaction uridine(54) in tRNA = pseudouridine(54) in tRNA. It catalyses the reaction uridine(55) in tRNA = pseudouridine(55) in tRNA. Responsible for synthesis of pseudouridine from uracil-54 and uracil-55 in the psi GC loop of transfer RNAs. This chain is tRNA pseudouridine synthase Pus10, found in Ignisphaera aggregans (strain DSM 17230 / JCM 13409 / AQ1.S1).